A 198-amino-acid chain; its full sequence is Elongation factor Ts (198 aa).

The interval 81-84 (TDFV) is involved in Mg(2+) ion dislocation from EF-Tu.

It belongs to the EF-Ts family.

It is found in the cytoplasm. Functionally, associates with the EF-Tu.GDP complex and induces the exchange of GDP to GTP. It remains bound to the aminoacyl-tRNA.EF-Tu.GTP complex up to the GTP hydrolysis stage on the ribosome. The chain is Elongation factor Ts from Dictyoglomus turgidum (strain DSM 6724 / Z-1310).